Reading from the N-terminus, the 320-residue chain is Beta-carotene 4-ketolase 3 (320 aa).

It carries out the reaction echinenone + 2 AH2 + 2 O2 = canthaxanthin + 2 A + 3 H2O. The enzyme catalyses all-trans-beta-carotene + 2 AH2 + 2 O2 = echinenone + 2 A + 3 H2O. The protein operates within carotenoid biosynthesis. In terms of biological role, involved in the biosynthesis of ketocarotenoids which are powerful anti-oxidative molecules. Catalyzes the conversion of beta-carotene to canthaxanthin via echinenone. The chain is Beta-carotene 4-ketolase 3 from Haematococcus lacustris (Green alga).